The chain runs to 151 residues: 3-dehydroquinate dehydratase (151 aa).

Tyr24 serves as the catalytic Proton acceptor. Residues Asn76, His82, and Asp89 each contribute to the substrate site. Catalysis depends on His102, which acts as the Proton donor. Substrate contacts are provided by residues 103 to 104 and Arg113; that span reads VS.

The protein belongs to the type-II 3-dehydroquinase family. Homododecamer.

It catalyses the reaction 3-dehydroquinate = 3-dehydroshikimate + H2O. The protein operates within metabolic intermediate biosynthesis; chorismate biosynthesis; chorismate from D-erythrose 4-phosphate and phosphoenolpyruvate: step 3/7. Catalyzes a trans-dehydration via an enolate intermediate. In Rhodopseudomonas palustris (strain BisA53), this protein is 3-dehydroquinate dehydratase.